A 906-amino-acid polypeptide reads, in one-letter code: Catenin alpha-1 (906 aa).

Thr2 carries the post-translational modification N-acetylthreonine. An involved in homodimerization region spans residues 2–228 (TAVHTGNINF…PILYTASQAC (227 aa)). Lys57 participates in a covalent cross-link: Glycyl lysine isopeptide (Lys-Gly) (interchain with G-Cter in SUMO2). The segment at 97–148 (VRKQCDLMKSAAGEFADDPCSSVKRGNMVRAARALLSAVTRLLILADMADVY) is interaction with JUP and CTNNB1. Residues Ser264, Ser268, Ser295, and Ser297 each carry the phosphoserine modification. The tract at residues 325–394 (TRDDRRERIV…AVMDHVSDSF (70 aa)) is interaction with alpha-actinin. At Thr634 the chain carries Phosphothreonine. The residue at position 641 (Ser641) is a Phosphoserine. Phosphothreonine is present on Thr645. Residues Ser652 and Ser655 each carry the phosphoserine modification. A Phosphothreonine modification is found at Thr658. Lys797 participates in a covalent cross-link: Glycyl lysine isopeptide (Lys-Gly) (interchain with G-Cter in SUMO2). Ser851 is subject to Phosphoserine. Residues 864 to 880 (PEKKPLVKREKQDETQT) show a composition bias toward basic and acidic residues. Residues 864-894 (PEKKPLVKREKQDETQTKIKRASQKKHVNPV) form a disordered region. Over residues 881–891 (KIKRASQKKHV) the composition is skewed to basic residues.

It belongs to the vinculin/alpha-catenin family. In terms of assembly, monomer and homodimer; the monomer preferentially binds to CTNNB1 and the homodimer to actin. Component of an cadherin:catenin adhesion complex composed of at least of CDH26, beta-catenin/CTNNB1, alpha-catenin/CTNNA1 and p120 catenin/CTNND1. Possible component of an E-cadherin/ catenin adhesion complex together with E-cadherin/CDH1 and beta-catenin/CTNNB1 or gamma-catenin/JUP; the complex is located to adherens junctions. The stable association of CTNNA1 is controversial as CTNNA1 was shown not to bind to F-actin when assembled in the complex. Alternatively, the CTNNA1-containing complex may be linked to F-actin by other proteins such as LIMA1. Binds AFDN and F-actin. Interacts with ARHGAP21. Interacts with AJUBA. Interacts with LIMA1. Interacts with vinculin/VCL. Interacts with TJP2/ZO2 (via N-terminus). Interacts with TJP1/ZO1 (via N-terminus). In terms of processing, sumoylated. Post-translationally, phosphorylation seems to contribute to the strength of cell-cell adhesion rather than to the basic capacity for cell-cell adhesion.

It localises to the cytoplasm. The protein localises to the cytoskeleton. The protein resides in the cell junction. It is found in the adherens junction. Its subcellular location is the cell membrane. It localises to the nucleus. Associates with the cytoplasmic domain of a variety of cadherins. The association of catenins to cadherins produces a complex which is linked to the actin filament network, and which seems to be of primary importance for cadherins cell-adhesion properties. Can associate with both E- and N-cadherins. Originally believed to be a stable component of E-cadherin/catenin adhesion complexes and to mediate the linkage of cadherins to the actin cytoskeleton at adherens junctions. In contrast, cortical actin was found to be much more dynamic than E-cadherin/catenin complexes and CTNNA1 was shown not to bind to F-actin when assembled in the complex suggesting a different linkage between actin and adherens junctions components. The homodimeric form may regulate actin filament assembly and inhibit actin branching by competing with the Arp2/3 complex for binding to actin filaments. Involved in the regulation of WWTR1/TAZ, YAP1 and TGFB1-dependent SMAD2 and SMAD3 nuclear accumulation. May play a crucial role in cell differentiation. This chain is Catenin alpha-1, found in Bos taurus (Bovine).